We begin with the raw amino-acid sequence, 77 residues long: Acyl carrier protein (77 aa).

The Carrier domain maps to Ser2–Ser77. O-(pantetheine 4'-phosphoryl)serine is present on Ser37.

It belongs to the acyl carrier protein (ACP) family. Post-translationally, 4'-phosphopantetheine is transferred from CoA to a specific serine of apo-ACP by AcpS. This modification is essential for activity because fatty acids are bound in thioester linkage to the sulfhydryl of the prosthetic group.

Its subcellular location is the cytoplasm. It participates in lipid metabolism; fatty acid biosynthesis. Functionally, carrier of the growing fatty acid chain in fatty acid biosynthesis. In Desulforudis audaxviator (strain MP104C), this protein is Acyl carrier protein.